The sequence spans 145 residues: Deoxyuridine 5'-triphosphate nucleotidohydrolase (145 aa).

Residues 62-64 (RSG), asparagine 75, 79-81 (TVD), and lysine 89 contribute to the substrate site.

This sequence belongs to the dUTPase family. Requires Mg(2+) as cofactor.

The enzyme catalyses dUTP + H2O = dUMP + diphosphate + H(+). It functions in the pathway pyrimidine metabolism; dUMP biosynthesis; dUMP from dCTP (dUTP route): step 2/2. This enzyme is involved in nucleotide metabolism: it produces dUMP, the immediate precursor of thymidine nucleotides and it decreases the intracellular concentration of dUTP so that uracil cannot be incorporated into DNA. The polypeptide is Deoxyuridine 5'-triphosphate nucleotidohydrolase (Helicobacter pylori (strain P12)).